Here is a 343-residue protein sequence, read N- to C-terminus: Methionine import ATP-binding protein MetN 1 (343 aa).

The region spanning Ile2–Ile241 is the ABC transporter domain. Gly38–Ser45 is a binding site for ATP.

The protein belongs to the ABC transporter superfamily. Methionine importer (TC 3.A.1.24) family. In terms of assembly, the complex is composed of two ATP-binding proteins (MetN), two transmembrane proteins (MetI) and a solute-binding protein (MetQ).

It localises to the cell inner membrane. The catalysed reaction is L-methionine(out) + ATP + H2O = L-methionine(in) + ADP + phosphate + H(+). It catalyses the reaction D-methionine(out) + ATP + H2O = D-methionine(in) + ADP + phosphate + H(+). Its function is as follows. Part of the ABC transporter complex MetNIQ involved in methionine import. Responsible for energy coupling to the transport system. This Salmonella choleraesuis (strain SC-B67) protein is Methionine import ATP-binding protein MetN 1.